Consider the following 124-residue polypeptide: Ribonuclease pancreatic (124 aa).

Residues 1-13 are compositionally biased toward basic and acidic residues; sequence KETAAEKFQRQHM. The segment at 1–21 is disordered; the sequence is KETAAEKFQRQHMDTSSSLSN. Residues K7 and R10 each coordinate substrate. H12 acts as the Proton acceptor in catalysis. Disulfide bonds link C26–C84, C40–C95, C58–C110, and C65–C72. A glycan (N-linked (GlcNAc...) asparagine) is linked at N34. Substrate is bound by residues 41–45, K66, and R85; that span reads KPVNT. H119 acts as the Proton donor in catalysis.

Belongs to the pancreatic ribonuclease family. Monomer. Interacts with and forms tight 1:1 complexes with RNH1. Dimerization of two such complexes may occur. Interaction with RNH1 inhibits this protein. In terms of tissue distribution, pancreas.

Its subcellular location is the secreted. It carries out the reaction an [RNA] containing cytidine + H2O = an [RNA]-3'-cytidine-3'-phosphate + a 5'-hydroxy-ribonucleotide-3'-[RNA].. It catalyses the reaction an [RNA] containing uridine + H2O = an [RNA]-3'-uridine-3'-phosphate + a 5'-hydroxy-ribonucleotide-3'-[RNA].. In terms of biological role, endonuclease that catalyzes the cleavage of RNA on the 3' side of pyrimidine nucleotides. Acts on single-stranded and double-stranded RNA. The protein is Ribonuclease pancreatic (RNASE1) of Hippopotamus amphibius (Hippopotamus).